A 409-amino-acid chain; its full sequence is Histidine--tRNA ligase (409 aa).

Belongs to the class-II aminoacyl-tRNA synthetase family. As to quaternary structure, homodimer.

It localises to the cytoplasm. It catalyses the reaction tRNA(His) + L-histidine + ATP = L-histidyl-tRNA(His) + AMP + diphosphate + H(+). The chain is Histidine--tRNA ligase from Campylobacter fetus subsp. fetus (strain 82-40).